We begin with the raw amino-acid sequence, 358 residues long: Probable branched-chain-amino-acid aminotransferase (358 aa).

Position 196 is an N6-(pyridoxal phosphate)lysine (K196).

This sequence belongs to the class-IV pyridoxal-phosphate-dependent aminotransferase family. Pyridoxal 5'-phosphate serves as cofactor.

It catalyses the reaction L-leucine + 2-oxoglutarate = 4-methyl-2-oxopentanoate + L-glutamate. It carries out the reaction L-isoleucine + 2-oxoglutarate = (S)-3-methyl-2-oxopentanoate + L-glutamate. The catalysed reaction is L-valine + 2-oxoglutarate = 3-methyl-2-oxobutanoate + L-glutamate. It participates in amino-acid biosynthesis; L-isoleucine biosynthesis; L-isoleucine from 2-oxobutanoate: step 4/4. Its pathway is amino-acid biosynthesis; L-leucine biosynthesis; L-leucine from 3-methyl-2-oxobutanoate: step 4/4. It functions in the pathway amino-acid biosynthesis; L-valine biosynthesis; L-valine from pyruvate: step 4/4. In terms of biological role, acts on leucine, isoleucine and valine. This is Probable branched-chain-amino-acid aminotransferase (ilvE) from Staphylococcus aureus (strain N315).